A 1068-amino-acid chain; its full sequence is Integrator complex subunit 3 homolog (1068 aa).

Disordered stretches follow at residues tyrosine 916 to serine 939 and valine 1001 to aspartate 1068. Phosphoserine is present on residues serine 1038, serine 1039, serine 1043, and serine 1044.

The protein belongs to the Integrator subunit 3 family. In terms of assembly, belongs to the multiprotein complex Integrator, at least composed of IntS1, IntS2, IntS3, IntS4, omd/IntS5, IntS6, defl/IntS7, IntS8, IntS9, IntS10, IntS11, IntS12, asun/IntS13, IntS14 and IntS15. The core complex associates with protein phosphatase 2A subunits mts/PP2A and Pp2A-29B, to form the Integrator-PP2A (INTAC) complex.

The protein resides in the nucleus. It is found in the cytoplasm. Functionally, component of the integrator complex, a multiprotein complex that terminates RNA polymerase II (Pol II) transcription in the promoter-proximal region of genes. The integrator complex provides a quality checkpoint during transcription elongation by driving premature transcription termination of transcripts that are unfavorably configured for transcriptional elongation: the complex terminates transcription by (1) catalyzing dephosphorylation of the C-terminal domain (CTD) of Pol II subunit Polr2A/Rbp1 and Spt5, and (2) degrading the exiting nascent RNA transcript via endonuclease activity. The integrator complex is also involved in the 3'-end processing of the U7 snRNA, and also the spliceosomal snRNAs U1, U2, U4 and U5. The sequence is that of Integrator complex subunit 3 homolog (IntS3) from Drosophila sechellia (Fruit fly).